A 516-amino-acid polypeptide reads, in one-letter code: Adenosine deaminase (516 aa).

The first 20 residues, 1–20, serve as a signal peptide directing secretion; the sequence is MFPRLIVWLLAASAVHAVLD.

Belongs to the metallo-dependent hydrolases superfamily. Adenosine and AMP deaminases family. ADGF subfamily. Requires Zn(2+) as cofactor. In terms of tissue distribution, salivary gland (at protein level).

The protein localises to the secreted. The catalysed reaction is adenosine + H2O + H(+) = inosine + NH4(+). Its function is as follows. Catalyzes the deamination of adenosine to inosine. The protein is Adenosine deaminase of Phlebotomus duboscqi (Sandfly).